Consider the following 660-residue polypeptide: MEAAAAAAAAAAAAAAAGGGCGSGPPPLLLSEGEQQCYSELFARCAGAAGGGPGSGPPEAARVAPGTATAAAGPVADLFRASQLPAETLHQITELCGAKRVGYFGPTQFYIALKLIAAAQSGLPVRIESIKCELPLPRFMMSKNDGEIRFGNPAELHGTKVQIPYLTTEKNSFKRMDDEDKQQETQSPTMSPLASPPSSPPHYQRVPLSHGYSKLRSSAEQMHPAPYEARQPLVQPEGSSSGGPGTKPLRHQASLIRSFSVERELQDNSSYPDEPWRITEEQREYYVNQFRSLQPDPSSFISGSVAKNFFTKSKLSIPELSYIWELSDADCDGALTLPEFCAAFHLIVARKNGYPLPEGLPPTLQPEYLQAAFPKPKWDCQLFDSYSESLPANQQPRDLNRMEKTSVKDMADLPVPNQDVTSDDKQALKSTINEALPKDVSEDPATPKDSNSLKARPRSRSYSSTSIEEAMKRGEDPPTPPPRPQKTHSRASSLDLNKVFQPSVPATKSGLLPPPPALPPRPCPSQSEQVSEAELLPQLSRAPSQAAESSPAKKDVLYSQPPSKPIRRKFRPENQATENQEPSTAASGPASAATMKPHPTVQKQSSKQKKAIQTAIRKNKEANAVLARLNSELQQQLKEVHQERIALENQLEQLRPVTVL.

The EH 1 domain occupies E34–E147. The segment at E169 to L208 is disordered. The residue at position 254 (S254) is a Phosphoserine. One can recognise an EH 2 domain in the interval Q282 to F373. An EF-hand domain is found at L315–R350. 4 residues coordinate Ca(2+): D328, D330, D332, and E339. Residues N433 to I616 are disordered. T479 is modified (phosphothreonine). S493 is subject to Phosphoserine. Residues L512–C523 show a composition bias toward pro residues. The segment at P514–L660 is interaction with RALBP1. The tract at residues P561–L660 is interaction with ASAP1. Over residues P582–T594 the composition is skewed to low complexity. Positions V601–V657 form a coiled coil.

As to quaternary structure, interacts with EPN1; the interaction is direct. Interacts with EPS15; the interaction is direct. Interacts with EPS15L1. Interacts with RALBP1; can form a ternary complex with activated Ral (RALA or RALB). Interacts with ASAP1; the interaction is direct and this complex can bind paxillin. Also forms a ternary complex with RALBP1 and ASAP1. Interacts with GRB2. Post-translationally, tyrosine-phosphorylated upon stimulation of cells with EGF. Phosphorylation on Tyr-residues induces its association with the EGF receptor probably indirectly through an adapter like GRB2. In terms of tissue distribution, expressed at high levels in the cerebrum, cerebellum, lung, kidney, and testis. Weakly expressed in the kidney. Isoform 2 is down-regulated during progression of prostate cancer.

It localises to the cytoplasm. In terms of biological role, involved in ligand-dependent receptor mediated endocytosis of the EGF and insulin receptors as part of the Ral signaling pathway. By controlling growth factor receptors endocytosis may regulate cell survival. Through ASAP1 may regulate cell adhesion and migration. This chain is RalBP1-associated Eps domain-containing protein 2 (REPS2), found in Homo sapiens (Human).